A 105-amino-acid chain; its full sequence is Large ribosomal subunit protein uL24 (105 aa).

It belongs to the universal ribosomal protein uL24 family. As to quaternary structure, part of the 50S ribosomal subunit.

Its function is as follows. One of two assembly initiator proteins, it binds directly to the 5'-end of the 23S rRNA, where it nucleates assembly of the 50S subunit. Functionally, one of the proteins that surrounds the polypeptide exit tunnel on the outside of the subunit. This is Large ribosomal subunit protein uL24 from Clostridium novyi (strain NT).